Reading from the N-terminus, the 1512-residue chain is Lysophospholipase NTE1 (1512 aa).

The Cytoplasmic portion of the chain corresponds to 1-48; sequence MAAPDAMTSLVKSSVALLSSAHESLPTSLAAMKTAETAPSSTFGILGR. A helical membrane pass occupies residues 49-69; that stretch reads VILSILSVLPTLLFWVSYTLP. Residues 70 to 83 are Lumenal-facing; the sequence is TWLFTLFSMSLTFT. A helical transmembrane segment spans residues 84–104; sequence MNFTTLMLVLVFVVSTISYFV. The Cytoplasmic segment spans residues 105-1512; sequence RYRYLTMYAR…RTMAPRRASI (1408 aa). Disordered stretches follow at residues 204-230, 262-362, 534-556, and 740-770; these read NREESDSDEDDGELQGESGGGSAQAHR, RHDE…AHPD, TQMSRGTGRSGRSSFSQPYQHDV, and TEDDLFGPPLQPTATNTSLRNGENSKKKRSR. Acidic residues predominate over residues 208–217; that stretch reads SDSDEDDGEL. Residues 268–291 show a composition bias toward polar residues; sequence GPSSSTPMSPQHRPSMTRNSSFNM. Basic residues predominate over residues 343-358; it reads HSKQRRSPSRSTKPKS. A compositionally biased stretch (low complexity) spans 537–549; that stretch reads SRGTGRSGRSSFS. A nucleoside 3',5'-cyclic phosphate-binding positions include 669-793 and 830-950; these read LSAS…SNRS and RLTT…IASR. Residues 751–761 are compositionally biased toward polar residues; it reads PTATNTSLRNG. The PNPLA domain maps to 1209-1373; it reads LVLGGGGARG…IDNLTVAHMK (165 aa). A GXGXXG motif is present at residues 1213–1218; it reads GGGARG. A GXSXG motif is present at residues 1240 to 1244; that stretch reads GTSIG. Ser1242 serves as the catalytic Nucleophile. Asp1360 serves as the catalytic Proton acceptor. The short motif at 1360–1362 is the DGA/G element; it reads DGG.

It belongs to the NTE family.

The protein resides in the endoplasmic reticulum membrane. It carries out the reaction a 1-acyl-sn-glycero-3-phosphocholine + H2O = sn-glycerol 3-phosphocholine + a fatty acid + H(+). With respect to regulation, inhibited by organophosphorus esters. In terms of biological role, intracellular phospholipase B that catalyzes the double deacylation of phosphatidylcholine (PC) to glycerophosphocholine (GroPCho). Plays an important role in membrane lipid homeostasis. Responsible for the rapid PC turnover in response to inositol, elevated temperatures, or when choline is present in the growth medium. In Phaeosphaeria nodorum (strain SN15 / ATCC MYA-4574 / FGSC 10173) (Glume blotch fungus), this protein is Lysophospholipase NTE1 (NTE1).